The sequence spans 603 residues: NADH-ubiquinone oxidoreductase chain 5 (603 aa).

16 consecutive transmembrane segments (helical) span residues Y4–I24, S38–D58, M87–Y107, L122–I142, W144–A160, A171–L191, T211–L233, T241–I261, L272–A292, I301–N320, A325–I347, S370–Y390, N405–Y422, L457–T477, I482–L502, and G582–I602.

This sequence belongs to the complex I subunit 5 family. Core subunit of respiratory chain NADH dehydrogenase (Complex I) which is composed of 45 different subunits.

It is found in the mitochondrion inner membrane. The enzyme catalyses a ubiquinone + NADH + 5 H(+)(in) = a ubiquinol + NAD(+) + 4 H(+)(out). In terms of biological role, core subunit of the mitochondrial membrane respiratory chain NADH dehydrogenase (Complex I) which catalyzes electron transfer from NADH through the respiratory chain, using ubiquinone as an electron acceptor. Essential for the catalytic activity and assembly of complex I. This is NADH-ubiquinone oxidoreductase chain 5 (MT-ND5) from Pan troglodytes (Chimpanzee).